Here is a 379-residue protein sequence, read N- to C-terminus: Actin, cytoplasmic (379 aa).

This sequence belongs to the actin family.

The protein localises to the cytoplasm. The protein resides in the cytoskeleton. It catalyses the reaction ATP + H2O = ADP + phosphate + H(+). In terms of biological role, actins are highly conserved proteins that are involved in various types of cell motility and are ubiquitously expressed in all eukaryotic cells. This chain is Actin, cytoplasmic, found in Euplotes crassus.